A 262-amino-acid chain; its full sequence is Granzyme A (262 aa).

Positions 1–26 are cleaved as a signal peptide; sequence MRNSYRFLASSLSVVVSLLLIPEDVC. Positions 27 to 28 are cleaved as a propeptide — activation peptide; it reads EK. Residues 29–259 enclose the Peptidase S1 domain; the sequence is IIGGNEVTPH…HLNWIIMTIK (231 aa). Residues Cys54 and Cys70 are joined by a disulfide bond. Catalysis depends on charge relay system residues His69 and Asp114. Disulfide bonds link Cys148–Cys218, Cys179–Cys197, and Cys208–Cys234. N-linked (GlcNAc...) asparagine glycosylation occurs at Asn170. Ser212 serves as the catalytic Charge relay system.

This sequence belongs to the peptidase S1 family. Granzyme subfamily. As to quaternary structure, homodimer; disulfide-linked. Interacts with APEX1.

The protein resides in the secreted. It is found in the cytoplasmic granule. The catalysed reaction is Hydrolysis of proteins, including fibronectin, type IV collagen and nucleolin. Preferential cleavage: -Arg-|-Xaa-, -Lys-|-Xaa- &gt;&gt; -Phe-|-Xaa- in small molecule substrates.. Functionally, abundant protease in the cytosolic granules of cytotoxic T-cells and NK-cells which activates caspase-independent pyroptosis when delivered into the target cell through the immunological synapse. It cleaves after Lys or Arg. Once delivered into the target cell, acts by catalyzing cleavage of gasdermin-B (GSDMB), releasing the pore-forming moiety of GSDMB, thereby triggering pyroptosis and target cell death. Cleaves APEX1 after 'Lys-31' and destroys its oxidative repair activity. Cleaves the nucleosome assembly protein SET after 'Lys-189', which disrupts its nucleosome assembly activity and allows the SET complex to translocate into the nucleus to nick and degrade the DNA. The polypeptide is Granzyme A (Homo sapiens (Human)).